We begin with the raw amino-acid sequence, 488 residues long: Diacylglycerol O-acyltransferase 1 (488 aa).

The disordered stretch occupies residues 1 to 57 (MGDRGSSRRRRTGSRPSSHGGGGPAAAEEEVRDAAAGPDVGAAGDAPAPAPNKDGDA). Residues 1–83 (MGDRGSSRRR…SLFSSDSGFS (83 aa)) lie on the Cytoplasmic side of the membrane. The involved in homomerization stretch occupies residues 1-91 (MGDRGSSRRR…FSNYRGILNW (91 aa)). 2 positions are modified to phosphoserine: serine 17 and serine 18. Low complexity predominate over residues 34 to 47 (AAAGPDVGAAGDAP). A helical transmembrane segment spans residues 84–118 (NYRGILNWCVVMLILSNARLFLENLIKYGILVDPI). Residues 119 to 130 (QVVSLFLKDPYS) are Lumenal-facing. Positions 119-130 (QVVSLFLKDPYS) are extracellular loop 1 (EL1). Residues 131 to 156 (WPAPCLVIAANVFAVAAFQVEKRLAV) form a helical membrane-spanning segment. An MBOAT fold region spans residues 131 to 488 (WPAPCLVIAA…LNYEAPAAEA (358 aa)). Residues 157–161 (GALTE) lie on the Cytoplasmic side of the membrane. A helical transmembrane segment spans residues 162–184 (QAGLLLHVANLATILCFPAAVVL). At 185 to 191 (LVESITP) the chain is on the lumenal side. The chain crosses the membrane as a helical span at residues 192–223 (VGSLLALMAHTILFLKLFSYRDVNSWCRRARA). Residues 224 to 273 (KAASAGKKASSAAAPHTVSYPDNLTYRDLYYFLFAPTLCYELNFPRSPRI) are Cytoplasmic-facing. An intracellular loop 1 (IL1) region spans residues 224–276 (KAASAGKKASSAAAPHTVSYPDNLTYRDLYYFLFAPTLCYELNFPRSPRIRKR). A helical transmembrane segment spans residues 274 to 308 (RKRFLLRRILEMLFFTQLQVGLIQQWMVPTIQNSM). Topologically, residues 309 to 315 (KPFKDMD) are lumenal. Residues 316–353 (YSRIIERLLKLAVPNHLIWLIFFYWLFHSCLNAVAELM) form a helical membrane-spanning segment. Residues 354 to 399 (QFGDREFYRDWWNSESVTYFWQNWNIPVHKWCIRHFYKPMLRRGSS) are Cytoplasmic-facing. Residues 354 to 399 (QFGDREFYRDWWNSESVTYFWQNWNIPVHKWCIRHFYKPMLRRGSS) form an intracellular loop 2 (IL2) region. Residues 360–366 (FYRDWWN) carry the FYXDWWN motif motif. Residues 374–382 (WQNWNIPVH), tyrosine 390, and arginine 404 each bind an acyl-CoA. Residues 380–394 (PVHKWCIRHFYKPML) are amphipathic helix (AH). The chain crosses the membrane as a helical span at residues 400-420 (KWMARTGVFLASAFFHEYLVS). Residue histidine 415 is part of the active site. Residues 421-428 (VPLRMFRL) are Lumenal-facing. The chain crosses the membrane as a helical span at residues 429–447 (WAFTGMMAQIPLAWFVGRF). At 448–449 (FQ) the chain is on the cytoplasmic side. The chain crosses the membrane as a helical span at residues 450–481 (GNYGNAAVWLSLIIGQPIAVLMYVHDYYVLNY). Residue tyrosine 477 coordinates an acyl-CoA. Residues 482-488 (EAPAAEA) lie on the Lumenal side of the membrane.

Belongs to the membrane-bound acyltransferase family. Sterol o-acyltransferase subfamily. As to quaternary structure, homodimer or homotetramer; both forms have similar enzymatic activities.

It localises to the endoplasmic reticulum membrane. The catalysed reaction is an acyl-CoA + a 1,2-diacyl-sn-glycerol = a triacyl-sn-glycerol + CoA. It carries out the reaction all-trans-retinol + an acyl-CoA = an all-trans-retinyl ester + CoA. The enzyme catalyses 2-(9Z-octadecenoyl)-glycerol + (9Z)-octadecenoyl-CoA = 1,2-di-(9Z-octadecenoyl)-sn-glycerol + CoA. It catalyses the reaction 1,2-di-(9Z-octadecenoyl)-sn-glycerol + (9Z)-octadecenoyl-CoA = 1,2,3-tri-(9Z-octadecenoyl)-glycerol + CoA. The catalysed reaction is all-trans-retinol + hexadecanoyl-CoA = all-trans-retinyl hexadecanoate + CoA. It carries out the reaction 1-O-(9Z-octadecenyl)-glycerol + (9Z)-octadecenoyl-CoA = 1-O-(9Z-octadecyl)-3-(9Z-octadecenoyl)-glycerol + CoA. The enzyme catalyses 1-O-(9Z-octadecyl)-3-(9Z-octadecenoyl)-glycerol + (9Z)-octadecenoyl-CoA = 1-O-(9Z-octadecenyl)-2,3-di-(9Z-octadecenoyl)glycerol + CoA. It catalyses the reaction 1-(9Z-octadecenoyl)-glycerol + (9Z)-octadecenoyl-CoA = 1,2-di-(9Z-octadecenoyl)-glycerol + CoA. The catalysed reaction is 1,2-di-(9Z-octadecenoyl)-glycerol + (9Z)-octadecenoate + H(+) = 1,2,3-tri-(9Z-octadecenoyl)-glycerol + H2O. It carries out the reaction 1-octadecanoyl-2-(5Z,8Z,11Z,14Z-eicosatetraenoyl)-sn-glycerol + (9Z)-octadecenoyl-CoA = 1-octadecanoyl-2-(5Z,8Z,11Z,14Z)-eicosatetraenoyl-3-(9Z)-octadecenoyl-sn-glycerol + CoA. The enzyme catalyses hexadecane-1,2-diol + 2 hexadecanoyl-CoA = 1,2-O,O-dihexadecanoyl-1,2-hexadecanediol + 2 CoA. It catalyses the reaction hexadecane-1,2-diol + hexadecanoyl-CoA = 2-hydroxyhexadecyl hexadecanoate + CoA. The catalysed reaction is 2-(9Z-octadecenoyl)-glycerol + hexadecanoyl-CoA = 1-hexadecanoyl-2-(9Z-octadecenoyl)-sn-glycerol + CoA. It carries out the reaction 1,2-di-(9Z-octadecenoyl)-sn-glycerol + hexadecanoyl-CoA = 1,2-di-(9Z)-octadecenoyl-3-hexadecanoyl-sn-glycerol + CoA. The enzyme catalyses hexadecan-1-ol + hexadecanoyl-CoA = hexadecanyl hexadecanoate + CoA. It catalyses the reaction 13-cis-retinol + hexadecanoyl-CoA = 13-cis-retinyl hexadecanoate + CoA. The catalysed reaction is 1,3-di-(9Z-octadecenoyl)-glycerol + (9Z)-octadecenoyl-CoA = 1,2,3-tri-(9Z-octadecenoyl)-glycerol + CoA. It carries out the reaction 2,3-di-(9Z)-octadecenoyl-sn-glycerol + (9Z)-octadecenoyl-CoA = 1,2,3-tri-(9Z-octadecenoyl)-glycerol + CoA. Its pathway is lipid metabolism; glycerolipid metabolism. Its activity is regulated as follows. XP620 is a selective DGAT1 inhibitor. Its function is as follows. Catalyzes the terminal and only committed step in triacylglycerol synthesis by using diacylglycerol and fatty acyl CoA as substrates. Highly expressed in epithelial cells of the small intestine and its activity is essential for the absorption of dietary fats. In liver, plays a role in esterifying exogenous fatty acids to glycerol, and is required to synthesize fat for storage. Also present in female mammary glands, where it produces fat in the milk. May be involved in VLDL (very low density lipoprotein) assembly. In contrast to DGAT2 it is not essential for survival. Functions as the major acyl-CoA retinol acyltransferase (ARAT) in the skin, where it acts to maintain retinoid homeostasis and prevent retinoid toxicity leading to skin and hair disorders. Exhibits additional acyltransferase activities, includin acyl CoA:monoacylglycerol acyltransferase (MGAT), wax monoester and wax diester synthases. Also able to use 1-monoalkylglycerol (1-MAkG) as an acyl acceptor for the synthesis of monoalkyl-monoacylglycerol (MAMAG). This Homo sapiens (Human) protein is Diacylglycerol O-acyltransferase 1.